We begin with the raw amino-acid sequence, 76 residues long: Putative phosphotransferase enzyme IIA component YyzE (76 aa).

The PTS EIIA type-1 domain maps to 1–76 (MVTPTKHAIG…LHQKIFTVVS (76 aa)). His-22 functions as the Tele-phosphohistidine intermediate in the catalytic mechanism.

Its subcellular location is the cytoplasm. Its function is as follows. The phosphoenolpyruvate-dependent sugar phosphotransferase system (PTS), a major carbohydrate active -transport system, catalyzes the phosphorylation of incoming sugar substrates concomitant with their translocation across the cell membrane. The polypeptide is Putative phosphotransferase enzyme IIA component YyzE (yyzE) (Bacillus subtilis (strain 168)).